Reading from the N-terminus, the 586-residue chain is Transmembrane protease serine 13 (586 aa).

2 disordered regions span residues 1 to 115 (MERD…VTTS) and 131 to 157 (PIRS…LPKF). At 1–165 (MERDSHGNAS…KFTWREGQKQ (165 aa)) the chain is on the cytoplasmic side. The 1-1 repeat unit spans residues 9–13 (ASPAR). The segment at 9 to 93 (ASPARTPSAG…ASPARASPAL (85 aa)) is 13 X 5 AA repeats of A-S-P-A-[GLQR]. A 2-1; approximate repeat occupies 14 to 18 (TPSAG). The segment covering 14–52 (TPSAGASPAQASPAGTPPGRASPAQASPAQASPAGTPPG) has biased composition (low complexity). A 4 X 5 AA repeats of T-P-P-G-R region spans residues 14 to 68 (TPSAGASPAQASPAGTPPGRASPAQASPAQASPAGTPPGRASPAQASPAGTPPGR). 10 consecutive repeat copies span residues 19–23 (ASPAQ), 24–28 (ASPAG), 29–33 (TPPGR), 34–38 (ASPAQ), 39–43 (ASPAQ), 44–48 (ASPAG), 49–53 (TPPGR), 54–58 (ASPAQ), 59–63 (ASPAG), and 64–68 (TPPGR). The 1-9; approximate repeat unit spans residues 69–78 (ASPGRASPAQ). Composition is skewed to low complexity over residues 69 to 111 (ASPG…RSAS) and 133 to 144 (RSSPARSAPATR). Tandem repeats lie at residues 79 to 83 (ASPAQ), 84 to 88 (ASPAR), and 89 to 93 (ASPAL). Residues 166 to 186 (LPLIGCVLLLIALVVSLIILF) traverse the membrane as a helical; Signal-anchor for type II membrane protein segment. Topologically, residues 187-586 (QFWQGHTGIR…GGDPGGAPRL (400 aa)) are extracellular. The SRCR domain maps to 195–325 (IRYKEQRESC…HCGLRAMTGR (131 aa)). The region spanning 204 to 226 (CPKHAVRCDGVVDCKLKSDELGC) is the LDL-receptor class A domain. Intrachain disulfides connect Cys250–Cys314, Cys263–Cys317, and Cys351–Cys367. N-linked (GlcNAc...) asparagine glycosylation is found at Asn255 and Asn292. The Peptidase S1 domain maps to 326-559 (IVGGALASDS…VLPWIYSKME (234 aa)). The active-site Charge relay system is the His366. A glycan (N-linked (GlcNAc...) asparagine) is linked at Asn405. The active-site Charge relay system is the Asp414. An N-linked (GlcNAc...) asparagine glycan is attached at Asn445. 3 disulfides stabilise this stretch: Cys448–Cys517, Cys480–Cys496, and Cys507–Cys535. Ser511 (charge relay system) is an active-site residue. Over residues 565-574 (QDTAPSRLGT) the composition is skewed to polar residues. Residues 565 to 586 (QDTAPSRLGTSSGGDPGGAPRL) are disordered. A compositionally biased stretch (gly residues) spans 575 to 586 (SSGGDPGGAPRL).

Belongs to the peptidase S1 family. Interacts with SPINT1/HAI-1; the interaction promotes the phosphorylation and cell membrane localization of TMPRSS13. Interacts with SPINT2/HAI-2; the interaction promotes the phosphorylation and cell membrane localization of TMPRSS13. The inactive zymogen is post-translationally modified and then trafficked to the cell surface, whereby it undergoes autocatalytic cleavage resulting in an activated form that is released extracellularly. In terms of processing, phosphorylation is required for localization at the cell surface. Phosphorylation increases following inhibition of protease activity by SPINT2/HAI-2. Post-translationally, N-glycosylation of Asn-405 and Asn-445 is required for exit from the endoplasmic reticulum and trafficking to the cell surface. Also required for autocleavage of the zymogen, activation and secretion of the mature protein. Expressed in placenta. As to expression, predominantly expressed in lung, placenta, pancreas, and prostate. In terms of tissue distribution, expressed in lung, placenta, pancreas, and prostate. Weakly expressed in testis and peripheral blood lymphocytes.

It is found in the cell membrane. It localises to the secreted. Its subcellular location is the cytoplasm. Cleavage of HGF is inhibited by SPINT1/HAI-1 via the BPTI/Kunitz inhibitor 1 domain. Functionally, serine protease. Cleaves the proform of PRSS8/prostasin to form the active protein. Cleaves the proform of HGF to form the active protein which promotes MAPK signaling. Promotes the formation of the stratum corneum and subsequently the epidermal barrier in embryos. This Homo sapiens (Human) protein is Transmembrane protease serine 13 (TMPRSS13).